Reading from the N-terminus, the 229-residue chain is MKTIEHELYYEFRIADDVKMIYTKKPFNLKLKELSNDNFNFVPRSKKIKYLKQLHTDIIYKVEDDFINFQEGDGLISSSLDVALVAYFADCLPIYFYDSVKKIIGLIHSGYKGSFNLIILKMLFMFEKMGSALKDLKIVFGPYNRSCCYEVSEIFLKEVSNKFSKDLLNASFVTRDGKIYFDNASFNLNLLSSFNLNIYNSKLCTYCLKNLYSYRRLRESQSYALIWRI.

3 residues coordinate Zn(2+): His55, Cys91, and His108.

This sequence belongs to the purine nucleoside phosphorylase YfiH/LACC1 family. In terms of assembly, homodimer. Cu(2+) is required as a cofactor. Requires Zn(2+) as cofactor.

It carries out the reaction adenosine + phosphate = alpha-D-ribose 1-phosphate + adenine. The catalysed reaction is S-methyl-5'-thioadenosine + phosphate = 5-(methylsulfanyl)-alpha-D-ribose 1-phosphate + adenine. The enzyme catalyses inosine + phosphate = alpha-D-ribose 1-phosphate + hypoxanthine. It catalyses the reaction adenosine + H2O + H(+) = inosine + NH4(+). In terms of biological role, purine nucleoside enzyme that catalyzes the phosphorolysis of adenosine and inosine nucleosides, yielding D-ribose 1-phosphate and the respective free bases, adenine and hypoxanthine. Also catalyzes the phosphorolysis of S-methyl-5'-thioadenosine into adenine and S-methyl-5-thio-alpha-D-ribose 1-phosphate. Also has adenosine deaminase activity. The protein is Purine nucleoside phosphorylase BB_0467 of Borreliella burgdorferi (strain ATCC 35210 / DSM 4680 / CIP 102532 / B31) (Borrelia burgdorferi).